The chain runs to 344 residues: L-rhamnose-proton symporter (344 aa).

10 consecutive transmembrane segments (helical) span residues 4–24 (AITM…CFYA), 38–58 (WSVG…ALLL), 68–88 (FSLS…IGNI), 101–121 (MGIG…TPII), 137–157 (TLLG…AGQL), 175–195 (LVLA…MNAA), 214–234 (LPSY…FCFI), 259–279 (VLLS…YAWG), 290–310 (ISWM…GLVL), and 323–343 (VLSL…IGMA).

This sequence belongs to the L-rhamnose transporter (TC 2.A.7.6) family.

It localises to the cell inner membrane. The catalysed reaction is L-rhamnopyranose(in) + H(+)(in) = L-rhamnopyranose(out) + H(+)(out). Uptake of L-rhamnose across the cytoplasmic membrane with the concomitant transport of protons into the cell (symport system). The sequence is that of L-rhamnose-proton symporter from Shigella boydii serotype 18 (strain CDC 3083-94 / BS512).